The chain runs to 231 residues: 5'-methylthioadenosine/S-adenosylhomocysteine nucleosidase (231 aa).

Glu-12 functions as the Proton acceptor in the catalytic mechanism. Residues Gly-78, Val-153, and Met-174 to Glu-175 contribute to the substrate site. Asp-198 (proton donor) is an active-site residue.

Belongs to the PNP/UDP phosphorylase family. MtnN subfamily.

The catalysed reaction is S-adenosyl-L-homocysteine + H2O = S-(5-deoxy-D-ribos-5-yl)-L-homocysteine + adenine. The enzyme catalyses S-methyl-5'-thioadenosine + H2O = 5-(methylsulfanyl)-D-ribose + adenine. It catalyses the reaction 5'-deoxyadenosine + H2O = 5-deoxy-D-ribose + adenine. Its pathway is amino-acid biosynthesis; L-methionine biosynthesis via salvage pathway; S-methyl-5-thio-alpha-D-ribose 1-phosphate from S-methyl-5'-thioadenosine (hydrolase route): step 1/2. Catalyzes the irreversible cleavage of the glycosidic bond in both 5'-methylthioadenosine (MTA) and S-adenosylhomocysteine (SAH/AdoHcy) to adenine and the corresponding thioribose, 5'-methylthioribose and S-ribosylhomocysteine, respectively. Also cleaves 5'-deoxyadenosine, a toxic by-product of radical S-adenosylmethionine (SAM) enzymes, into 5-deoxyribose and adenine. In Vibrio campbellii (strain ATCC BAA-1116), this protein is 5'-methylthioadenosine/S-adenosylhomocysteine nucleosidase.